Here is a 158-residue protein sequence, read N- to C-terminus: Protein E6 (158 aa).

Zinc fingers lie at residues 32–68 (CVYC…CQSC) and 105–141 (CMCC…CRHC). The PDZ-binding domain signature appears at 156-158 (TQV).

This sequence belongs to the papillomaviridae E6 protein family. As to quaternary structure, forms homodimers. Interacts with ubiquitin-protein ligase UBE3A/E6-AP; this interaction stimulates UBE3A ubiquitin activity. Interacts with host BAK1.

It is found in the host cytoplasm. The protein localises to the host nucleus. In terms of biological role, plays a major role in the induction and maintenance of cellular transformation. E6 associates with host UBE3A/E6-AP ubiquitin-protein ligase and modulates its activity. Protects host keratinocytes from apoptosis by mediating the degradation of host BAK1. May also inhibit host immune response. In Homo sapiens (Human), this protein is Protein E6.